The following is a 445-amino-acid chain: Argininosuccinate synthase (445 aa).

ATP contacts are provided by residues 17-25 and Ala-43; that span reads AFSGGLDTS. Tyr-99 lines the L-citrulline pocket. Residues Gly-129 and Thr-131 each contribute to the ATP site. Positions 131, 135, and 136 each coordinate L-aspartate. Asn-135 is an L-citrulline binding site. Asp-136 contributes to the ATP binding site. Arg-139 and Ser-192 together coordinate L-citrulline. Position 194 (Asp-194) interacts with ATP. L-citrulline contacts are provided by Thr-201, Glu-203, and Glu-280.

The protein belongs to the argininosuccinate synthase family. Type 2 subfamily. Homotetramer.

Its subcellular location is the cytoplasm. The enzyme catalyses L-citrulline + L-aspartate + ATP = 2-(N(omega)-L-arginino)succinate + AMP + diphosphate + H(+). Its pathway is amino-acid biosynthesis; L-arginine biosynthesis; L-arginine from L-ornithine and carbamoyl phosphate: step 2/3. In Rhodopseudomonas palustris (strain ATCC BAA-98 / CGA009), this protein is Argininosuccinate synthase.